Consider the following 154-residue polypeptide: uncharacterized protein (154 aa).

Residues 13-128 (SKGVLLLRTL…VFTFVAVDNN (116 aa)) enclose the HotDog ACOT-type domain.

The protein belongs to the acyl coenzyme A hydrolase family.

This is an uncharacterized protein from Haemophilus influenzae (strain ATCC 51907 / DSM 11121 / KW20 / Rd).